We begin with the raw amino-acid sequence, 226 residues long: Cytidylate kinase (226 aa).

Gly-11–Thr-19 contacts ATP.

This sequence belongs to the cytidylate kinase family. Type 1 subfamily.

It localises to the cytoplasm. It carries out the reaction CMP + ATP = CDP + ADP. It catalyses the reaction dCMP + ATP = dCDP + ADP. The polypeptide is Cytidylate kinase (Pelotomaculum thermopropionicum (strain DSM 13744 / JCM 10971 / SI)).